Here is a 149-residue protein sequence, read N- to C-terminus: Down syndrome critical region protein 9 (149 aa).

Positions 1 to 41 are disordered; the sequence is MGRICPVNSRARRLRARPGRPSGDSLPYHQLQGGAPRLWSP.

The chain is Down syndrome critical region protein 9 (DSCR9) from Pan troglodytes (Chimpanzee).